The sequence spans 1302 residues: DNA-directed RNA polymerase subunit beta (1302 aa).

The protein belongs to the RNA polymerase beta chain family. The RNAP catalytic core consists of 2 alpha, 1 beta, 1 beta' and 1 omega subunit. When a sigma factor is associated with the core the holoenzyme is formed, which can initiate transcription.

The enzyme catalyses RNA(n) + a ribonucleoside 5'-triphosphate = RNA(n+1) + diphosphate. Its function is as follows. DNA-dependent RNA polymerase catalyzes the transcription of DNA into RNA using the four ribonucleoside triphosphates as substrates. In Spiroplasma citri, this protein is DNA-directed RNA polymerase subunit beta.